The chain runs to 438 residues: Exosome complex component RRP45 (438 aa).

Position 65 is a phosphoserine (serine 65). Position 297 is an N6-acetyllysine; alternate (lysine 297). Lysine 297 participates in a covalent cross-link: Glycyl lysine isopeptide (Lys-Gly) (interchain with G-Cter in SUMO1); alternate. Residue lysine 297 forms a Glycyl lysine isopeptide (Lys-Gly) (interchain with G-Cter in SUMO2); alternate linkage. Phosphoserine is present on residues serine 306 and serine 346. Disordered regions lie at residues 337 to 365 (AQIGDGIENSWGDLEDSEKEEEEEEGGID) and 377 to 438 (TGEV…RTAN). The segment covering 349-364 (DLEDSEKEEEEEEGGI) has biased composition (acidic residues). Phosphoserine occurs at positions 393 and 395. Residues 427-438 (QGKRKKKKRTAN) are compositionally biased toward basic residues.

Belongs to the RNase PH family. In terms of assembly, component of the RNA exosome core complex (Exo-9), composed of EXOSC1, EXOSC2, EXOSC3, EXOSC4, EXOSC5, EXOSC6, EXOSC7, EXOSC8 and EXOSC9; within the complex interacts with EXOSC3, EXOSC4, EXOSC5 and DIS3. The catalytically inactive RNA exosome core complex (Exo-9) associates with the catalytic subunit EXOSC10/RRP6. Exo-9 may associate with DIS3 to form the nucleolar exosome complex, or DIS3L to form the cytoplasmic exosome complex. Exo-9 is formed by a hexameric base ring consisting of the heterodimers EXOSC4-EXOSC9, EXOSC5-EXOSC8 and EXOSC6-EXOSC7, and a cap ring consisting of EXOSC1, EXOSC2 and EXOSC3. The RNA exosome complex associates with cofactors C1D/RRP47, MPHOSPH6/MPP6 and MTREX/MTR4. Interacts (via C-terminus region) with SETX (via N-terminus domain); the interaction enhances SETX sumoylation. Interacts with DIS3; the interaction is direct.

Its subcellular location is the cytoplasm. The protein localises to the nucleus. The protein resides in the nucleolus. It localises to the nucleoplasm. Non-catalytic component of the RNA exosome complex which has 3'-&gt;5' exoribonuclease activity and participates in a multitude of cellular RNA processing and degradation events. In the nucleus, the RNA exosome complex is involved in proper maturation of stable RNA species such as rRNA, snRNA and snoRNA, in the elimination of RNA processing by-products and non-coding 'pervasive' transcripts, such as antisense RNA species and promoter-upstream transcripts (PROMPTs), and of mRNAs with processing defects, thereby limiting or excluding their export to the cytoplasm. The RNA exosome may be involved in Ig class switch recombination (CSR) and/or Ig variable region somatic hypermutation (SHM) by targeting AICDA deamination activity to transcribed dsDNA substrates. In the cytoplasm, the RNA exosome complex is involved in general mRNA turnover and specifically degrades inherently unstable mRNAs containing AU-rich elements (AREs) within their 3' untranslated regions, and in RNA surveillance pathways, preventing translation of aberrant mRNAs. It seems to be involved in degradation of histone mRNA. The catalytic inactive RNA exosome core complex of 9 subunits (Exo-9) is proposed to play a pivotal role in the binding and presentation of RNA for ribonucleolysis, and to serve as a scaffold for the association with catalytic subunits and accessory proteins or complexes. EXOSC9 binds to ARE-containing RNAs. The polypeptide is Exosome complex component RRP45 (Exosc9) (Mus musculus (Mouse)).